We begin with the raw amino-acid sequence, 493 residues long: Aspartyl/glutamyl-tRNA(Asn/Gln) amidotransferase subunit B (493 aa).

The segment at 473–493 (KSGGKANPKQAADLVNKRLTE) is disordered.

The protein belongs to the GatB/GatE family. GatB subfamily. Heterotrimer of A, B and C subunits.

It catalyses the reaction L-glutamyl-tRNA(Gln) + L-glutamine + ATP + H2O = L-glutaminyl-tRNA(Gln) + L-glutamate + ADP + phosphate + H(+). The enzyme catalyses L-aspartyl-tRNA(Asn) + L-glutamine + ATP + H2O = L-asparaginyl-tRNA(Asn) + L-glutamate + ADP + phosphate + 2 H(+). Allows the formation of correctly charged Asn-tRNA(Asn) or Gln-tRNA(Gln) through the transamidation of misacylated Asp-tRNA(Asn) or Glu-tRNA(Gln) in organisms which lack either or both of asparaginyl-tRNA or glutaminyl-tRNA synthetases. The reaction takes place in the presence of glutamine and ATP through an activated phospho-Asp-tRNA(Asn) or phospho-Glu-tRNA(Gln). In Treponema denticola (strain ATCC 35405 / DSM 14222 / CIP 103919 / JCM 8153 / KCTC 15104), this protein is Aspartyl/glutamyl-tRNA(Asn/Gln) amidotransferase subunit B.